A 178-amino-acid polypeptide reads, in one-letter code: 2-C-methyl-D-erythritol 2,4-cyclodiphosphate synthase (178 aa).

The a divalent metal cation site is built by D24, H26, and H61. 4-CDP-2-C-methyl-D-erythritol 2-phosphate is bound at residue 24–26; sequence DSH. Residue 150–153 coordinates 4-CDP-2-C-methyl-D-erythritol 2-phosphate; the sequence is TSGE.

Belongs to the IspF family. Homotrimer. The cofactor is a divalent metal cation.

It catalyses the reaction 4-CDP-2-C-methyl-D-erythritol 2-phosphate = 2-C-methyl-D-erythritol 2,4-cyclic diphosphate + CMP. It participates in isoprenoid biosynthesis; isopentenyl diphosphate biosynthesis via DXP pathway; isopentenyl diphosphate from 1-deoxy-D-xylulose 5-phosphate: step 4/6. Functionally, involved in the biosynthesis of isopentenyl diphosphate (IPP) and dimethylallyl diphosphate (DMAPP), two major building blocks of isoprenoid compounds. Catalyzes the conversion of 4-diphosphocytidyl-2-C-methyl-D-erythritol 2-phosphate (CDP-ME2P) to 2-C-methyl-D-erythritol 2,4-cyclodiphosphate (ME-CPP) with a corresponding release of cytidine 5-monophosphate (CMP). The protein is 2-C-methyl-D-erythritol 2,4-cyclodiphosphate synthase of Chlamydia muridarum (strain MoPn / Nigg).